A 1262-amino-acid chain; its full sequence is Unconventional myosin-VI (1262 aa).

The Myosin N-terminal SH3-like domain occupies 2 to 53 (EDGKPVWAPHPTDGFQMGNIVDIGPDSLTIEPLNQKGKTFLALINQVFPAEE). Residues 57 to 771 (KDVEDNCSLM…KFAEFDQIMK (715 aa)) enclose the Myosin motor domain. 151 to 158 (GESGAGKT) contributes to the ATP binding site. The residue at position 267 (Ser267) is a Phosphoserine. A responsible for slow ATPase activity region spans residues 273–317 (YLNRGCTRFFANKETDKQILQNRKSPEYVKAGSLKDPLLDDHGDF). Position 405 is a phosphothreonine (Thr405). Residue Ser604 is modified to Phosphoserine. Actin-binding regions lie at residues 651–673 (LNLL…KPNL) and 665–672 (FIRCIKPN). The segment at 782 to 810 (KRVNLWLVCSRWKKVQWCSLSVIKLKNKI) is required for binding calmodulin. The IQ domain maps to 814-834 (AEACIKMQKTIRMWLCKRRHK). Residues 835 to 916 (PRIDGLVKVG…EDLLSALQKK (82 aa)) form a three-helix bundle region. The stretch at 864-984 (KPEVNRQIKN…EDDEKRIQAE (121 aa)) forms a coiled coil. The SAH stretch occupies residues 917–984 (KQQEEEAERL…EDDEKRIQAE (68 aa)). The segment at 933–955 (MEKERKRREEDEERRRKEEEERR) is disordered. The residue at position 1025 (Ser1025) is a Phosphoserine. Positions 1034–1253 (LRRGPAVQAT…ESRQARPTYA (220 aa)) are interaction with TAX1BP1 and CALCOCO2/NDP52. Positions 1084-1086 (RRL) are interaction with OPTN. Ser1123 bears the Phosphoserine mark. The tract at residues 1125–1253 (QQNPAAQLPA…ESRQARPTYA (129 aa)) is interaction with TOM1.

It belongs to the TRAFAC class myosin-kinesin ATPase superfamily. Myosin family. As to quaternary structure, homodimer; dimerization seems to implicate the unfolding of the three-helix bundle region creating an additional calmodulin binding site, and cargo binding. Able to function as a monomer under specific conditions in vitro. Forms a complex with CFTR and DAB2 in the apical membrane of epithelial cells. Component of the DISP/DOCK7-induced septin displacement complex, at least composed of DOCK7, LRCH3 and MYO6. Binding to calmodulin through a unique insert, not found in other myosins, located in the neck region between the motor domain and the IQ domain appears to contribute to the directionality reversal. This interaction occurs only if the C-terminal lobe of calmodulin is occupied by calcium. Interaction with F-actin/ACTN1 occurs only at the apical brush border domain of the proximal tubule cells. Interacts with DAB2. In vitro, the C-terminal globular tail binds a C-terminal region of DAB2. Interacts with CFTR. Interacts with CABP5. Interacts (via residues 1128-1256) with TOM1 (via residues 392-463). Interacts (via residues 1060-1285) with OPTN. Interacts (via residues 1060-1285) with TAX1BP1 and CALCOCO2/NDP52. Interacts with TOM1L2. Interacts with CLIC5; may work together in a complex which also includes RDX and MYO6 to stabilize linkages between the plasma membrane and subjacent actin cytoskeleton at the base of stereocilia. Post-translationally, phosphorylation in the motor domain, induced by EGF, results in translocation of MYO6 from the cell surface to membrane ruffles and affects F-actin dynamics. Phosphorylated in vitro by p21-activated kinase (PAK). Within the cochlea, expressed specifically within the sensory hair cells (at protein level). Expressed in the inner and outer plexiform layer of the retina (at protein level). Widely expressed. Expressed in the brain, kidney, liver, and testis.

It localises to the golgi apparatus. Its subcellular location is the trans-Golgi network membrane. The protein localises to the nucleus. It is found in the cytoplasm. The protein resides in the perinuclear region. It localises to the membrane. Its subcellular location is the clathrin-coated pit. The protein localises to the cytoplasmic vesicle. It is found in the clathrin-coated vesicle. The protein resides in the cell projection. It localises to the filopodium. Its subcellular location is the ruffle membrane. The protein localises to the microvillus. It is found in the cytosol. In terms of biological role, myosins are actin-based motor molecules with ATPase activity. Unconventional myosins serve in intracellular movements. Myosin 6 is a reverse-direction motor protein that moves towards the minus-end of actin filaments. Has slow rate of actin-activated ADP release due to weak ATP binding. Functions in a variety of intracellular processes such as vesicular membrane trafficking and cell migration. Required for the structural integrity of the Golgi apparatus via the p53-dependent pro-survival pathway. Appears to be involved in a very early step of clathrin-mediated endocytosis in polarized epithelial cells. Together with TOM1, mediates delivery of endocytic cargo to autophagosomes thereby promoting autophagosome maturation and driving fusion with lysosomes. Links TOM1 with autophagy receptors, such as TAX1BP1; CALCOCO2/NDP52 and OPTN. May act as a regulator of F-actin dynamics. As part of the DISP complex, may regulate the association of septins with actin and thereby regulate the actin cytoskeleton. May play a role in transporting DAB2 from the plasma membrane to specific cellular targets. May play a role in the extension and network organization of neurites. Required for structural integrity of inner ear hair cells. Required for the correct localization of CLIC5 and RDX at the stereocilium base. Modulates RNA polymerase II-dependent transcription. This chain is Unconventional myosin-VI (Myo6), found in Mus musculus (Mouse).